Reading from the N-terminus, the 123-residue chain is MIQMQSTLDAADNSGARRVMCIKVLGGSHRRYAHIGDIIKITVKEAIPRGKVKKGDVLKAVVVRTRKGVRRQDGSVIRFDRNACVLLNDTTEQPIGTRIFGPVTRELRNTKFMKIVSLAPEVL.

Belongs to the universal ribosomal protein uL14 family. As to quaternary structure, part of the 50S ribosomal subunit. Forms a cluster with proteins L3 and L19. In the 70S ribosome, L14 and L19 interact and together make contacts with the 16S rRNA in bridges B5 and B8.

Binds to 23S rRNA. Forms part of two intersubunit bridges in the 70S ribosome. The sequence is that of Large ribosomal subunit protein uL14 from Photobacterium profundum (strain SS9).